Reading from the N-terminus, the 391-residue chain is Erythronate-4-phosphate dehydrogenase (391 aa).

S45 and T67 together coordinate substrate. Positions 147 and 176 each coordinate NAD(+). R209 is an active-site residue. D238 is a binding site for NAD(+). E243 is an active-site residue. The active-site Proton donor is H260. G263 is a binding site for NAD(+). Residue Y264 coordinates substrate.

This sequence belongs to the D-isomer specific 2-hydroxyacid dehydrogenase family. PdxB subfamily. Homodimer.

Its subcellular location is the cytoplasm. The catalysed reaction is 4-phospho-D-erythronate + NAD(+) = (R)-3-hydroxy-2-oxo-4-phosphooxybutanoate + NADH + H(+). It functions in the pathway cofactor biosynthesis; pyridoxine 5'-phosphate biosynthesis; pyridoxine 5'-phosphate from D-erythrose 4-phosphate: step 2/5. Functionally, catalyzes the oxidation of erythronate-4-phosphate to 3-hydroxy-2-oxo-4-phosphonooxybutanoate. The sequence is that of Erythronate-4-phosphate dehydrogenase from Photobacterium profundum (strain SS9).